Reading from the N-terminus, the 188-residue chain is GTP cyclohydrolase 1 (188 aa).

3 residues coordinate Zn(2+): C76, H79, and C148.

It belongs to the GTP cyclohydrolase I family. In terms of assembly, homomer.

The catalysed reaction is GTP + H2O = 7,8-dihydroneopterin 3'-triphosphate + formate + H(+). The protein operates within cofactor biosynthesis; 7,8-dihydroneopterin triphosphate biosynthesis; 7,8-dihydroneopterin triphosphate from GTP: step 1/1. The protein is GTP cyclohydrolase 1 of Thermoanaerobacter pseudethanolicus (strain ATCC 33223 / 39E) (Clostridium thermohydrosulfuricum).